An 88-amino-acid chain; its full sequence is MLTAQDKQKIIKENQLAESDTGSPEVQVALLTARINDLQGHFEAHKKDNHSRRGLLRLVSQRRKLLDYLHDKDVERYRSLIKKLNIRR.

Belongs to the universal ribosomal protein uS15 family. As to quaternary structure, part of the 30S ribosomal subunit. Forms a bridge to the 50S subunit in the 70S ribosome, contacting the 23S rRNA.

In terms of biological role, one of the primary rRNA binding proteins, it binds directly to 16S rRNA where it helps nucleate assembly of the platform of the 30S subunit by binding and bridging several RNA helices of the 16S rRNA. Forms an intersubunit bridge (bridge B4) with the 23S rRNA of the 50S subunit in the ribosome. The sequence is that of Small ribosomal subunit protein uS15 from Francisella tularensis subsp. tularensis (strain FSC 198).